A 520-amino-acid chain; its full sequence is Glutamate--cysteine ligase (520 aa).

The protein belongs to the glutamate--cysteine ligase type 1 family. Type 1 subfamily.

The enzyme catalyses L-cysteine + L-glutamate + ATP = gamma-L-glutamyl-L-cysteine + ADP + phosphate + H(+). It functions in the pathway sulfur metabolism; glutathione biosynthesis; glutathione from L-cysteine and L-glutamate: step 1/2. The chain is Glutamate--cysteine ligase from Sodalis glossinidius (strain morsitans).